The primary structure comprises 204 residues: uncharacterized protein (204 aa).

The disordered stretch occupies residues 118–169; sequence FPAASERPMPSRRLSKATQNVQTRPSERPAPCHRRPGPRGPGGRDPPEACHP.

This is an uncharacterized protein from Encephalitozoon cuniculi (strain GB-M1) (Microsporidian parasite).